We begin with the raw amino-acid sequence, 89 residues long: Elongation factor 1-beta (89 aa).

This sequence belongs to the EF-1-beta/EF-1-delta family.

In terms of biological role, promotes the exchange of GDP for GTP in EF-1-alpha/GDP, thus allowing the regeneration of EF-1-alpha/GTP that could then be used to form the ternary complex EF-1-alpha/GTP/AAtRNA. The polypeptide is Elongation factor 1-beta (Methanobrevibacter smithii (strain ATCC 35061 / DSM 861 / OCM 144 / PS)).